The primary structure comprises 113 residues: Large ribosomal subunit protein bL20c (113 aa).

The protein belongs to the bacterial ribosomal protein bL20 family.

The protein resides in the plastid. It is found in the chloroplast. Functionally, binds directly to 23S ribosomal RNA and is necessary for the in vitro assembly process of the 50S ribosomal subunit. It is not involved in the protein synthesizing functions of that subunit. The protein is Large ribosomal subunit protein bL20c of Staurastrum punctulatum (Green alga).